A 502-amino-acid chain; its full sequence is MATAAVIGLNTGKRLLSSSFYHSDVTEKFLSVNDHCSSQYHIASTKSGITAKKASNYSPSFPSSNRHTQSAKALKESVDVASTEKPWLPNGTDKELEEECYDDDDLISHSVEAILLLQKSMLEKSWNLSFEKAVSSEYPGKGTIRKKKIPVITCSGISARQRRIGAKKKTNMTHVKAVSDVSSGKQVRGYVKGVISEDVLSHVEVVRLSKKIKSGLRLDDHKSRLKDRLGCEPSDEQLAVSLKISRAELQAWLMECHLAREKLAMSNVRLVMSIAQRYDNLGAEMSDLVQGGLIGLLRGIEKFDSSKGFRISTYVYWWIRQGVSRALVDNSRTLRLPTHLHERLGLIRNAKLRLQEKGITPSIDRIAESLNMSQKKVRNATEAVSKVFSLDRDAFPSLNGLPGETHHSYIADTRLENNPWHGYDDLALKEEVSKLISATLGEREKEIIRLYYGLDKECLTWEDISKRIGLSRERVRQVGLVALEKLKHAARKRKMEAMILKN.

The N-terminal 23 residues, 1–23 (MATAAVIGLNTGKRLLSSSFYHS), are a transit peptide targeting the chloroplast. A compositionally biased stretch (polar residues) spans 57–71 (YSPSFPSSNRHTQSA). A disordered region spans residues 57-92 (YSPSFPSSNRHTQSAKALKESVDVASTEKPWLPNGT). Position 170 is a phosphothreonine (Thr170). Positions 287-300 (DLVQGGLIGLLRGI) match the Polymerase core binding motif. A DNA-binding region (H-T-H motif) is located at residues 461-480 (WEDISKRIGLSRERVRQVGL).

This sequence belongs to the sigma-70 factor family. As to quaternary structure, interacts with SIB1 in chloroplast. Binds to CSK. Post-translationally, the phosphorylation of Thr-170 mediated by oxidative conditions of plastoquinone (PQ) changes the promoter specificity, selectively inhibiting the transcription of the psaA gene, which encodes a PS-I protein. Phosphorylation of the holoenzyme occurs in the dark. This phosphorylation in response to plastoquinone redox state modification is mediated by CSK. As to expression, highly expressed in leaves, and to a lesser extent in roots. Expressed in old seedlings (8 days), cotyledons, hypocotyls, leaves, sepals and siliques.

Its subcellular location is the plastid. It localises to the chloroplast. Functionally, essential protein. Sigma factors are initiation factors that promote the attachment of plastid-encoded RNA polymerase (PEP) to specific initiation sites and are then released. Controls the transcription of the psaA gene and thus modulates photosystem stoichiometry. Thereby maintains a harmonious electron flow and photosynthetic efficiency. This Arabidopsis thaliana (Mouse-ear cress) protein is RNA polymerase sigma factor sigA (SIGA).